The primary structure comprises 396 residues: Calreticulin (396 aa).

Residues 1–15 form the signal peptide; the sequence is MKSLCLLAIVAVVSA. A disulfide bridge links Cys101 with Cys133. The an alpha-D-glucoside site is built by Tyr105, Lys107, Tyr124, and Asp131. 7 consecutive repeat copies span residues 186 to 197, 205 to 216, 222 to 233, 239 to 250, 254 to 264, 268 to 278, and 282 to 292. The tract at residues 186–250 is 4 X approximate repeats; that stretch reads AQTGSLEEDW…DAKKPEDWDD (65 aa). The interval 193-301 is P-domain; sequence EDWDLLPAKK…PEYTPDDELY (109 aa). Over residues 202 to 212 the composition is skewed to basic and acidic residues; the sequence is KIKDPDAKKPE. The tract at residues 202–250 is disordered; that stretch reads KIKDPDAKKPEDWDEREYIDDAEDVKPEDWEKPEHIPDPDAKKPEDWDD. The span at 213–224 shows a compositional bias: acidic residues; it reads DWDEREYIDDAE. Positions 225–246 are enriched in basic and acidic residues; the sequence is DVKPEDWEKPEHIPDPDAKKPE. A 3 X approximate repeats region spans residues 254-292; that stretch reads GEWEPPMIDNPEYKGEWKPKQIKNPAYKGKWIHPEIENP. A C-domain region spans residues 302 to 396; it reads LYENWGAIGF…KEEEEGHDEL (95 aa). Asp312 is a binding site for an alpha-D-glucoside. The span at 342-380 shows a compositional bias: basic and acidic residues; that stretch reads FDKLKTVEKEKKEKADEEARKVEEEARKKAEEEKEAKKD. The segment at 342 to 396 is disordered; sequence FDKLKTVEKEKKEKADEEARKVEEEARKKAEEEKEAKKDDDEEEEKEEEEGHDEL. Acidic residues predominate over residues 381 to 396; the sequence is DDEEEEKEEEEGHDEL. Residues 393–396 carry the Prevents secretion from ER motif; sequence HDEL.

It belongs to the calreticulin family.

The protein resides in the endoplasmic reticulum lumen. In terms of biological role, molecular calcium-binding chaperone promoting folding, oligomeric assembly and quality control in the ER via the calreticulin/calnexin cycle. This lectin may interact transiently with almost all of the monoglucosylated glycoproteins that are synthesized in the ER. Probably by controlling the folding of extracellular matrix protein unc-52/Perlecan, may play a role in the formation of fibrous organelles, a hemidesmosome-like structure attaching muscles to the epidermis. Protects dopaminergic neurons against oxidative stress-induced neurodegeneration. The protein is Calreticulin (crt-1) of Caenorhabditis briggsae.